The sequence spans 252 residues: MIETKPIPGLALPRHDHALVLFSGGQDSTTCLAWALERFAHVETIGFTYGQRHSVEMECRGRVRQVLAHMSGRSGADWGSRLGDDHVLDLGNALHHVGQSALTGRSPIEIGQGGLPTSFVPGRNLIFLTYAAALGWRRGLRRMVGGMCETDYSGYPDCRDDTIKAMQLALNTGMEAHFVLETPLMWLTKAETWALADSLGGPALVALIEEETHTCYLGDRSQRHPWGYGCGECPACSLRAEGWREWQTASSA.

22-32 (FSGGQDSTTCL) contributes to the ATP binding site. Cysteine 215, cysteine 230, cysteine 233, and cysteine 236 together coordinate Zn(2+).

It belongs to the QueC family. Zn(2+) is required as a cofactor.

It catalyses the reaction 7-carboxy-7-deazaguanine + NH4(+) + ATP = 7-cyano-7-deazaguanine + ADP + phosphate + H2O + H(+). It functions in the pathway purine metabolism; 7-cyano-7-deazaguanine biosynthesis. Its function is as follows. Catalyzes the ATP-dependent conversion of 7-carboxy-7-deazaguanine (CDG) to 7-cyano-7-deazaguanine (preQ(0)). This is 7-cyano-7-deazaguanine synthase from Granulibacter bethesdensis (strain ATCC BAA-1260 / CGDNIH1).